A 456-amino-acid chain; its full sequence is Cell adhesion molecule 1 (456 aa).

The N-terminal stretch at 1–47 is a signal peptide; sequence MASAVLPSGSQCAAAAAVAAAAAPPGLRLRLLLLLLSAAALIPTGDG. The Ig-like V-type domain maps to 48–142; the sequence is QNLFTKDVTV…PPQESYTTIT (95 aa). Over 48–388 the chain is Extracellular; it reads QNLFTKDVTV…EEGTIGAVDH (341 aa). Cysteines 67 and 127 form a disulfide. Asn70, Asn104, Asn116, and Asn168 each carry an N-linked (GlcNAc...) asparagine glycan. 2 consecutive Ig-like C2-type domains span residues 147-241 and 246-332; these read PRNL…RYLE and PQVH…YMLY. 2 disulfide bridges follow: Cys169-Cys223 and Cys270-Cys316. N-linked (GlcNAc...) asparagine glycosylation is found at Asn307 and Asn311. The helical transmembrane segment at 389-409 threads the bilayer; it reads AVIGGVVAVVVFAMLCLLIIL. Topologically, residues 410-456 are cytoplasmic; it reads GRYFARHKGTYFTHEAKGADDAADADTAIINAEGGQNNSEEKKEYFI. Thr436 bears the Phosphothreonine mark. A Phosphoserine modification is found at Ser448.

Belongs to the nectin family. As to quaternary structure, homodimer (via Ig-like V-type domain). Interacts with FARP1. Interacts (via Ig-like V-type domain) with CRTAM (via Ig-like V-type domain); the interaction competes with CRTAM homodimerization and CADM1 homodimerization. Interacts (via C-terminus) with EPB41L3/DAL1. The interaction with EPB41L3/DAL1 may act to anchor CADM1 to the actin cytoskeleton. Interacts (via C-terminus) with MPP2 (via PDZ domain). Interacts (via C-terminus) with MPP3 (via PDZ domain); this interaction connects CADM1 with DLG1. Interacts (via C-terminus) with PALS2 (via PDZ domain). In terms of processing, N-glycosylated. Post-translationally, glycosylation at Asn-70 and Asn-104 promotes adhesive binding and synapse induction. As to expression, expressed dominantly in epithelial cells but not expressed in fibroblast cells (at protein level). Expressed in the T-cell area of lymph nodes, specifically in CD8+ and CD4- CD8- dendritic cells (at protein level). Expressed in CD8+ dendritic cells in the spleen (at protein level). Expressed in CD103+ dendritic cells in the small intestine lamina propria and mesenteric lymph nodes (at protein level). Expressed in brain, lung, kidney, testis, heart, spleen and liver, but not expressed in skeletal muscle.

Its subcellular location is the cell membrane. The protein localises to the synaptic cell membrane. In terms of biological role, mediates homophilic cell-cell adhesion in a Ca(2+)-independent manner. Also mediates heterophilic cell-cell adhesion with CADM3 and NECTIN3 in a Ca(2+)-independent manner. Interaction with CRTAM promotes natural killer (NK) cell cytotoxicity and interferon-gamma (IFN-gamma) secretion by CD8+ T-cells in vitro as well as NK cell-mediated rejection of tumors expressing CADM1 in vivo. In mast cells, may mediate attachment to and promote communication with nerves. CADM1, together with MITF, is essential for development and survival of mast cells in vivo. By interacting with CRTAM and thus promoting the adhesion between CD8+ T-cells and CD8+ dendritic cells, regulates the retention of activated CD8+ T-cell within the draining lymph node. Required for the intestinal retention of intraepithelial CD4+ CD8+ T-cells and, to a lesser extent, intraepithelial and lamina propria CD8+ T-cells and CD4+ T-cells. Interaction with CRTAM promotes the adhesion to gut-associated CD103+ dendritic cells, which may facilitate the expression of gut-homing and adhesion molecules on T-cells and the conversion of CD4+ T-cells into CD4+ CD8+ T-cells. Acts as a synaptic cell adhesion molecule and plays a role in the formation of dendritic spines and in synapse assembly. May be involved in neuronal migration, axon growth, pathfinding, and fasciculation on the axons of differentiating neurons. May play diverse roles in the spermatogenesis including in the adhesion of spermatocytes and spermatids to Sertoli cells and for their normal differentiation into mature spermatozoa. The sequence is that of Cell adhesion molecule 1 from Mus musculus (Mouse).